Reading from the N-terminus, the 286-residue chain is Type II restriction enzyme NgoMIV (286 aa).

Mg(2+) contacts are provided by D140 and C186.

In terms of assembly, homotetramer. It depends on Mg(2+) as a cofactor.

It catalyses the reaction Endonucleolytic cleavage of DNA to give specific double-stranded fragments with terminal 5'-phosphates.. Its function is as follows. A P subtype restriction enzyme that recognizes the double-stranded sequence 5'-GCCGGC-3' and cleaves after G-1. This is Type II restriction enzyme NgoMIV (ngoMIVR) from Neisseria gonorrhoeae.